The sequence spans 755 residues: uncharacterized protein (755 aa).

7 disordered regions span residues 1-44, 72-91, 99-174, 393-467, 523-545, 584-672, and 734-755; these read MAAP…AAAQ, AEHS…ATAQ, FSLS…IPHY, TTNV…SSSR, LPKT…EGGG, VSSS…LPSG, and QAAT…PRRK. Composition is skewed to low complexity over residues 10 to 25 and 35 to 44; these read TTTQ…TTTT and TTTGSGAAAQ. Composition is skewed to low complexity over residues 112-130, 139-151, and 393-412; these read ISSS…NASS, SPDL…LSGS, and TTNV…TKST. The span at 429–446 shows a compositional bias: acidic residues; sequence IEEDTIQFDDPGQGEDDN. The span at 452–462 shows a compositional bias: pro residues; it reads NTPPPPGPPPN. Residues 536-545 show a composition bias toward gly residues; sequence ATGGVTEGGG. A compositionally biased stretch (polar residues) spans 590-599; that stretch reads LPQPQVATTI. Low complexity-rich tracts occupy residues 600-666 and 740-755; these read TPQA…QTPQ and SQPS…PRRK.

The protein belongs to the chlamydial CPn_0572/CT_456/TC_0741 family.

This is an uncharacterized protein from Chlamydia pneumoniae (Chlamydophila pneumoniae).